The chain runs to 407 residues: Probable tRNA pseudouridine synthase D (407 aa).

The Nucleophile role is filled by Asp81. The region spanning 151–372 is the TRUD domain; it reads GFPNYFGIQR…PGGRRELLIR (222 aa).

This sequence belongs to the pseudouridine synthase TruD family.

It catalyses the reaction uridine(13) in tRNA = pseudouridine(13) in tRNA. Functionally, could be responsible for synthesis of pseudouridine from uracil-13 in transfer RNAs. This Pyrococcus furiosus (strain ATCC 43587 / DSM 3638 / JCM 8422 / Vc1) protein is Probable tRNA pseudouridine synthase D.